Consider the following 79-residue polypeptide: Acyl carrier protein (79 aa).

Positions 3 to 78 constitute a Carrier domain; sequence QEILEKVRSI…DAVSYIQEKK (76 aa). Ser38 carries the O-(pantetheine 4'-phosphoryl)serine modification.

It belongs to the acyl carrier protein (ACP) family. 4'-phosphopantetheine is transferred from CoA to a specific serine of apo-ACP by AcpS. This modification is essential for activity because fatty acids are bound in thioester linkage to the sulfhydryl of the prosthetic group.

It localises to the cytoplasm. Its pathway is lipid metabolism; fatty acid biosynthesis. Carrier of the growing fatty acid chain in fatty acid biosynthesis. This chain is Acyl carrier protein, found in Synechococcus sp. (strain RCC307).